The sequence spans 379 residues: Beta-1,3-N-acetylglucosaminyltransferase lunatic fringe (379 aa).

The Cytoplasmic segment spans residues 1–8 (MLKRCGRR). Residues 9-29 (LLLALAGALLACLLVLTADPP) form a helical; Signal-anchor for type II membrane protein membrane-spanning segment. Residues 30–379 (PPPLPAERGR…TPWCPRTAIF (350 aa)) lie on the Lumenal side of the membrane. The tract at residues 86–107 (RDAGPPPGAAPRPADGHPRPLA) is disordered. Residue arginine 129 participates in substrate binding. The N-linked (GlcNAc...) asparagine glycan is linked to asparagine 167. Cystine bridges form between cysteine 168–cysteine 179 and cysteine 197–cysteine 260. Aspartate 201 is a binding site for substrate. Aspartate 202 is a binding site for Mn(2+). Aspartate 290 is a catalytic residue. Residue histidine 314 participates in Mn(2+) binding. Residues cysteine 364 and cysteine 373 are joined by a disulfide bond.

The protein belongs to the glycosyltransferase 31 family. Requires Mn(2+) as cofactor. Co(2+) serves as cofactor. A soluble form may be derived from the membrane form by proteolytic processing.

The protein localises to the golgi apparatus. The protein resides in the golgi apparatus membrane. It catalyses the reaction 3-O-(alpha-L-fucosyl)-L-threonyl-[EGF-like domain protein] + UDP-N-acetyl-alpha-D-glucosamine = 3-O-(N-acetyl-beta-D-glucosaminyl-(1-&gt;3)-alpha-L-fucosyl)-L-threonyl-[EGF-like domain protein] + UDP + H(+). The enzyme catalyses 3-O-(alpha-L-fucosyl)-L-seryl-[EGF-like domain protein] + UDP-N-acetyl-alpha-D-glucosamine = 3-O-(N-acetyl-beta-D-glucosaminyl-(1-&gt;3)-alpha-L-fucosyl)-L-seryl-[EGF-like domain protein] + UDP + H(+). In terms of biological role, glycosyltransferase that initiates the elongation of O-linked fucose residues attached to EGF-like repeats in the extracellular domain of Notch molecules. Modulates NOTCH1 activity by modifying O-fucose residues at specific EGF-like domains resulting in inhibition of NOTCH1 activation by JAG1 and enhancement of NOTCH1 activation by DLL1 via an increase in its binding to DLL1. Decreases the binding of JAG1 to NOTCH2 but not that of DLL1. Essential mediator of somite segmentation and patterning. The chain is Beta-1,3-N-acetylglucosaminyltransferase lunatic fringe from Homo sapiens (Human).